Reading from the N-terminus, the 313-residue chain is L-lactate dehydrogenase 1 (313 aa).

Valine 15, aspartate 36, arginine 41, and tyrosine 66 together coordinate NAD(+). Substrate is bound by residues glutamine 83, arginine 89, and 121–124 (NPVD). NAD(+) contacts are provided by residues 119 to 121 (ASN) and serine 144. 149–152 (DTAR) is a binding site for substrate. Beta-D-fructose 1,6-bisphosphate contacts are provided by arginine 154 and histidine 169. Histidine 176 functions as the Proton acceptor in the catalytic mechanism. The residue at position 218 (tyrosine 218) is a Phosphotyrosine. Threonine 227 serves as a coordination point for substrate.

This sequence belongs to the LDH/MDH superfamily. LDH family. Homotetramer.

The protein localises to the cytoplasm. The catalysed reaction is (S)-lactate + NAD(+) = pyruvate + NADH + H(+). It participates in fermentation; pyruvate fermentation to lactate; (S)-lactate from pyruvate: step 1/1. Its activity is regulated as follows. Allosterically activated by fructose 1,6-bisphosphate (FBP). In terms of biological role, catalyzes the conversion of lactate to pyruvate. This chain is L-lactate dehydrogenase 1, found in Listeria innocua serovar 6a (strain ATCC BAA-680 / CLIP 11262).